We begin with the raw amino-acid sequence, 349 residues long: 5-deoxyribose 1-phosphate isomerase (349 aa).

Substrate-binding positions include arginine 49–alanine 51, arginine 92, and glutamine 199. Catalysis depends on aspartate 240, which acts as the Proton donor. Asparagine 250–lysine 251 is a binding site for substrate.

Belongs to the EIF-2B alpha/beta/delta subunits family. DrdI subfamily.

The enzyme catalyses 5-deoxy-alpha-D-ribose 1-phosphate = 5-deoxy-D-ribulose 1-phosphate. The protein operates within carbohydrate degradation. Its function is as follows. Catalyzes the isomerization of 5-deoxy-alpha-D-ribose 1-phosphate to 5-deoxy-D-ribulose 1-phosphate, as part of a 5-deoxyribose salvage pathway that recycles this toxic radical SAM enzyme by-product to mainstream metabolites. This Clostridium botulinum (strain Kyoto / Type A2) protein is 5-deoxyribose 1-phosphate isomerase.